The sequence spans 108 residues: Kanamycin resistance protein (108 aa).

In terms of domain architecture, N-acetyltransferase spans 1 to 99 (SRTLLLERGR…PAVYMVQTRQ (99 aa)).

This chain is Kanamycin resistance protein, found in Rhizobium radiobacter (Agrobacterium tumefaciens).